The chain runs to 416 residues: Phosphoglycerate kinase (416 aa).

(2R)-3-phosphoglycerate-binding residues include valine 23, aspartate 24, phenylalanine 25, asparagine 26, glutamine 38, arginine 39, serine 62, histidine 63, glycine 65, arginine 66, leucine 121, arginine 122, histidine 168, and arginine 169. Glycine 212 contributes to the ADP binding site. Glycine 212 contributes to the CDP binding site. 2 residues coordinate AMP: alanine 213 and lysine 214. ATP is bound at residue alanine 213. Residue alanine 213 coordinates Mg(2+). Mg(2+) contacts are provided by alanine 216 and aspartate 217. Position 217 (aspartate 217) interacts with CDP. AMP is bound at residue lysine 218. Lysine 218 serves as a coordination point for ATP. ADP is bound at residue glycine 236. Glycine 236 contacts CDP. Glycine 237 and glycine 311 together coordinate AMP. Residues glycine 237 and glycine 311 each coordinate ATP. 2 residues coordinate CDP: glycine 336 and phenylalanine 341. Phenylalanine 341 lines the ADP pocket. Glutamate 342 lines the AMP pocket. Positions 342, 373, and 374 each coordinate ATP. Aspartate 373 contacts Mg(2+).

The protein belongs to the phosphoglycerate kinase family. Monomer. Requires Mg(2+) as cofactor.

The protein resides in the cytoplasm. The protein localises to the mitochondrion. The catalysed reaction is (2R)-3-phosphoglycerate + ATP = (2R)-3-phospho-glyceroyl phosphate + ADP. It participates in carbohydrate degradation; glycolysis; pyruvate from D-glyceraldehyde 3-phosphate: step 2/5. In terms of biological role, catalyzes one of the two ATP producing reactions in the glycolytic pathway via the reversible conversion of 1,3-diphosphoglycerate to 3-phosphoglycerate. Both L- and D- forms of purine and pyrimidine nucleotides can be used as substrates, but the activity is much lower on pyrimidines. Negatively regulates the biosynthesis of acetyl-CoA from pyruvate in the mitochondrion. This Candida glabrata (strain ATCC 2001 / BCRC 20586 / JCM 3761 / NBRC 0622 / NRRL Y-65 / CBS 138) (Yeast) protein is Phosphoglycerate kinase (PGK1).